A 242-amino-acid polypeptide reads, in one-letter code: MTCCIDQDSLGQTFQDAIDILIQQSAGESQYSSENRNYMAIINPYPHVRGNANYYGMSPTENPLYDWRGVTNGSADLYLEGGFHQSVQNIAESQLVQPPFFQQKGGRGRRKLRLFEYLFESLCNSEMVSCIQWVDKARGIFQFISKNKETLAELWGQRKGNRKPMTYQKMARALRNYARTGEIIKIRRKLTYQFSEAVLQRLAPANYLGKDLFYPQYGQPDQGYLSLNHWNANHYAHGSYQS.

Positions 112-195 form a DNA-binding region, ETS; sequence LRLFEYLFES…IRRKLTYQFS (84 aa).

Belongs to the ETS family. As to quaternary structure, binds DNA as a monomer. Expressed in lymphoid tissues, including spleen, bone marrow and thymus. According to PubMed:19037245, highly expressed in red pulp macrophages and, at lower, levels in B-cells, but not in other cells, including, monocytes, dendritic cells and other tissue macrophages. According to PubMed:10464163 expressed in pre- and mature B-cells but not in immature B-cells; according to PubMed:10187812 not expressed in pre- but predominantly in mature B-cells and at lower levels in macrophages.

It localises to the nucleus. Functionally, controls the development of red pulp macrophages required for red blood cells recycling and iron homeostasis. Transcription factor that binds to the PU-box, a purine-rich DNA sequence (5'-GAGGA[AT]-3') that can act as a lymphoid-specific enhancer. Regulates VCAM1 gene expression. The chain is Transcription factor Spi-C (Spic) from Mus musculus (Mouse).